The following is a 512-amino-acid chain: Ribose import ATP-binding protein RbsA 1 (512 aa).

ABC transporter domains are found at residues 8–244 (FRME…IGRE) and 254–502 (AHRG…LNIA). 40–47 (GENGAGKS) lines the ATP pocket.

Belongs to the ABC transporter superfamily. Ribose importer (TC 3.A.1.2.1) family. In terms of assembly, the complex is composed of an ATP-binding protein (RbsA), two transmembrane proteins (RbsC) and a solute-binding protein (RbsB).

The protein localises to the cell inner membrane. It catalyses the reaction D-ribose(out) + ATP + H2O = D-ribose(in) + ADP + phosphate + H(+). Functionally, part of the ABC transporter complex RbsABC involved in ribose import. Responsible for energy coupling to the transport system. The chain is Ribose import ATP-binding protein RbsA 1 from Rhizobium johnstonii (strain DSM 114642 / LMG 32736 / 3841) (Rhizobium leguminosarum bv. viciae).